The primary structure comprises 200 residues: Cleavage and polyadenylation specificity factor subunit 5 (200 aa).

Positions 45–170 (LRKAVEGIII…LSLIAVSLYE (126 aa)) constitute a Nudix hydrolase domain. The interaction with RNA stretch occupies residues 70-72 (NYF). Positions 77–98 (GKLKPGENEIDGLIRKLTKKLS) match the Nudix box motif.

This sequence belongs to the Nudix hydrolase family. CPSF5 subfamily. In terms of assembly, homodimer (via N- and C-terminus); binds RNA as homodimer. Component of the cleavage factor Im (CFIm) complex.

The protein localises to the nucleus. Its subcellular location is the cytoplasm. Component of the cleavage factor Im (CFIm) complex that functions as an activator of the pre-mRNA 3'-end cleavage and polyadenylation processing required for the maturation of pre-mRNA into functional mRNAs. CFIm contributes to the recruitment of multiprotein complexes on specific sequences on the pre-mRNA 3'-end, so called cleavage and polyadenylation signals (pA signals). Most pre-mRNAs contain multiple pA signals, resulting in alternative cleavage and polyadenylation (APA) producing mRNAs with variable 3'-end formation. The CFIm complex acts as a key regulator of cleavage and polyadenylation site choice during APA through its binding to 5'-UGUA-3' elements localized in the 3'-untranslated region (UTR) for a huge number of pre-mRNAs. Binds to 5'-UGUA-3' elements localized upstream of pA signals that act as enhancers of pre-mRNA 3'-end processing. The homodimer mediates simultaneous sequence-specific recognition of two 5'-UGUA-3' elements within the pre-mRNA. Plays a role in somatic cell fate transitions and pluripotency by regulating widespread changes in gene expression through an APA-dependent function. Binds to chromatin. The chain is Cleavage and polyadenylation specificity factor subunit 5 from Dictyostelium discoideum (Social amoeba).